Here is a 219-residue protein sequence, read N- to C-terminus: Probable lipoprotein YiaD (219 aa).

Positions 1 to 20 (MKKRVYLIAAVVSGALAVSG) are cleaved as a signal peptide. Cys-21 carries the N-palmitoyl cysteine lipid modification. A lipid anchor (S-diacylglycerol cysteine) is attached at Cys-21. 2 helical membrane-spanning segments follow: residues 37-55 (IGAG…LSSS) and 62-84 (GALI…MDVQ). An OmpA-like domain is found at 103–219 (GDNIILNMPN…RRVEITLSPL (117 aa)).

It localises to the cell inner membrane. The protein resides in the cell outer membrane. In terms of biological role, suppresses temperature-sensitive mutations in BamB when overexpressed. In Escherichia coli (strain K12), this protein is Probable lipoprotein YiaD (yiaD).